We begin with the raw amino-acid sequence, 635 residues long: 1-deoxy-D-xylulose-5-phosphate synthase (635 aa).

Residues histidine 77 and 118–120 (GHA) contribute to the thiamine diphosphate site. Aspartate 149 lines the Mg(2+) pocket. Thiamine diphosphate-binding positions include 150 to 151 (GS), asparagine 178, phenylalanine 290, and glutamate 375. Asparagine 178 lines the Mg(2+) pocket.

The protein belongs to the transketolase family. DXPS subfamily. As to quaternary structure, homodimer. It depends on Mg(2+) as a cofactor. The cofactor is thiamine diphosphate.

It catalyses the reaction D-glyceraldehyde 3-phosphate + pyruvate + H(+) = 1-deoxy-D-xylulose 5-phosphate + CO2. The protein operates within metabolic intermediate biosynthesis; 1-deoxy-D-xylulose 5-phosphate biosynthesis; 1-deoxy-D-xylulose 5-phosphate from D-glyceraldehyde 3-phosphate and pyruvate: step 1/1. Catalyzes the acyloin condensation reaction between C atoms 2 and 3 of pyruvate and glyceraldehyde 3-phosphate to yield 1-deoxy-D-xylulose-5-phosphate (DXP). In Chlorobium phaeovibrioides (strain DSM 265 / 1930) (Prosthecochloris vibrioformis (strain DSM 265)), this protein is 1-deoxy-D-xylulose-5-phosphate synthase.